The sequence spans 378 residues: Cobalt-precorrin-5B C(1)-methyltransferase (378 aa).

This sequence belongs to the CbiD family.

The catalysed reaction is Co-precorrin-5B + S-adenosyl-L-methionine = Co-precorrin-6A + S-adenosyl-L-homocysteine. The protein operates within cofactor biosynthesis; adenosylcobalamin biosynthesis; cob(II)yrinate a,c-diamide from sirohydrochlorin (anaerobic route): step 6/10. Its function is as follows. Catalyzes the methylation of C-1 in cobalt-precorrin-5B to form cobalt-precorrin-6A. The protein is Cobalt-precorrin-5B C(1)-methyltransferase of Photorhabdus laumondii subsp. laumondii (strain DSM 15139 / CIP 105565 / TT01) (Photorhabdus luminescens subsp. laumondii).